Here is a 662-residue protein sequence, read N- to C-terminus: Aprataxin-like protein (662 aa).

Residues 4 to 108 (SSALIKDISK…ISKDFVSTSL (105 aa)) form the HIT domain. Residues 381–403 (LRCNQCEFVTNMLLDLKAHLYQH) form a C2H2-type zinc finger. The interval 482-662 (KNINGPSVNM…PAPPSNSKPS (181 aa)) is disordered. Low complexity predominate over residues 490–500 (NMMNQNNPNNP). Composition is skewed to polar residues over residues 501–513 (FRNT…QSQK) and 560–569 (GHQQFPNASS). Positions 570-582 (VGGGQTGLPGQGQ) are enriched in gly residues. A compositionally biased stretch (polar residues) spans 588–599 (WNSNKIFNQQNR). The span at 600-626 (QNTVQAQPQAQNQQTNQQQIQNSNKNQ) shows a compositional bias: low complexity. Residues 653 to 662 (PAPPSNSKPS) are compositionally biased toward pro residues.

It localises to the nucleus. DNA-binding protein involved in single-strand DNA break repair, double-strand DNA break repair and base excision repair. Resolves abortive DNA ligation intermediates formed either at base excision sites, or when DNA ligases attempt to repair non-ligatable breaks induced by reactive oxygen species. Catalyzes the release of adenylate groups covalently linked to 5'-phosphate termini, resulting in the production of 5'-phosphate termini that can be efficiently rejoined. This Drosophila melanogaster (Fruit fly) protein is Aprataxin-like protein.